We begin with the raw amino-acid sequence, 142 residues long: uncharacterized protein (142 aa).

Residues 1–22 (MSGSVNQNTDQHSQDSSSTPNN) form a disordered region. 2 helical membrane passes run 63–83 (LFVMYMIVQVSYYIVPFVLLV) and 109–129 (IIDGIIGVLQFIFWFWIFVDL).

It localises to the membrane. This is an uncharacterized protein from Acanthamoeba polyphaga mimivirus (APMV).